Here is a 193-residue protein sequence, read N- to C-terminus: Putative manganese efflux pump MntP (193 aa).

A run of 6 helical transmembrane segments spans residues 3–23, 41–61, 69–89, 107–127, 130–150, and 164–184; these read IFAVFLLAIALSMDAFAVAVV, AAFGFFQFAMPVIGWWLGVSV, DHWIAFVLLGWIGGKMALSGL, AGRNLVVLGVATSIDALAVGL, AILGTPIWADAAIIGIVCAVI, and LCALNGWAELAGGLTLLAIAC.

Belongs to the MntP (TC 9.B.29) family.

It is found in the cell inner membrane. In terms of biological role, probably functions as a manganese efflux pump. The sequence is that of Putative manganese efflux pump MntP from Desulfovibrio desulfuricans (strain ATCC 27774 / DSM 6949 / MB).